An 80-amino-acid chain; its full sequence is Defensin-like protein 291 (80 aa).

The signal sequence occupies residues 1 to 29; sequence MAASKTTIFIVFVLCLSCTLLVNISGIQA. Intrachain disulfides connect Cys50/Cys70, Cys56/Cys75, and Cys62/Cys77.

This sequence belongs to the DEFL family.

The protein resides in the secreted. The sequence is that of Defensin-like protein 291 from Arabidopsis thaliana (Mouse-ear cress).